We begin with the raw amino-acid sequence, 1728 residues long: Nebulin-related-anchoring protein (1728 aa).

Residues 4–64 (QACSRCGYGV…HAHNPKNNTF (61 aa)) form the LIM zinc-binding domain. Nebulin repeat units follow at residues 173-200 (TPAY…ERVS), 201-235 (TFTP…QQRG), 244-271 (TPAY…REMK), 313-340 (TPAY…KMKG), 345-379 (HSLA…NSKG), 386-414 (ETPQ…TQLR), 416-450 (HYDG…HDVV), 484-518 (KFSS…RNKL), 519-553 (NYTL…KTKG), 555-589 (GFEM…KMKG), 599-623 (LLHS…ESKT), 624-658 (HFNL…DYTV), 659-689 (LPED…WMRG), 699-721 (NLEQ…RVDE), 723-757 (KFTS…QSVH), 758-792 (QYTI…KQKA), 794-828 (GFEL…RSRG), 841-866 (QMSH…DTRS), 867-893 (QCHI…VGYR), 898-932 (CFTA…WMKG), 943-960 (VEQA…KYRQ), 966-1000 (KFTS…NVKH), 1001-1035 (HYTQ…RLRD), 1037-1071 (GYKL…RMKG), 1075-1109 (GSRS…HAKA), 1110-1136 (HFHL…QDYR), 1141-1175 (QHTV…FMRG), 1180-1203 (VPGT…KYRQ), 1209-1243 (KYTA…DARH), 1244-1278 (QYTM…NLRA), 1280-1314 (GYKL…KERG), 1318-1352 (GVRN…SSQA), 1353-1379 (QCHL…HDYR), 1384-1418 (EFTA…GMKG), 1425-1446 (QSPQ…KYRK), 1452-1478 (KFTT…RLYR), 1487-1521 (RYTP…QSRA), 1523-1557 (GYDF…RDRG), 1561-1595 (GYRS…KGRS), 1596-1630 (QFHS…QHTS), and 1637-1661 (LKHA…LTRG). Thr-203 carries the phosphothreonine modification. Ser-1078 carries the phosphoserine modification.

In terms of assembly, interacts with actin, alpha-actinin, KLHL41, TLN1 and VCL. Interacts with CSRP3. As to expression, expressed in cardiac and skeletal muscle. Not detected in kidney, spleen, liver, brain, lung, stomach or uterus.

May be involved in anchoring the terminal actin filaments in the myofibril to the membrane and in transmitting tension from the myofibrils to the extracellular matrix. The sequence is that of Nebulin-related-anchoring protein from Mus musculus (Mouse).